A 560-amino-acid chain; its full sequence is MVTLSNVGADVEKNIVPEVNDASKRDSDNASADFQPGVKRVRAVASVWSKKTLWLTFALLYLVAFVDMLLVSVQSTLNPFITSSFEKHGLLASVSIVATILSGCSTLTLAKIVDVWGRIEGFLFMLLVVVVALIMKATCKNMEAYVAAHTLYWTGHIGMIYCVDVMLADMTTLRNRMIMFSINNTPTIASTFAGPKIADLFFSNLNFRWAFGAFAIMLVGVSLPVIVIMLFMERKSVKAGFLVKEKSGRSAWESIKYHLIEFDVVGIVLITASFALILLPFSIVVYAPKGWATGYIIAMEVVGVVCGAIFLAWERFLAPVQFLPFKYLKNPTIIGSCLLYGVMFASALLTITTAGYVLNSFSLSSAILAPGIGLYTGNFKWAAYAGIPFMLLGTALLIPFRQPNTSIGAVTITQVLVGIGTSFFSVCGQLAVMSVVSHQEVAVVLAIWGMFGSIGASVGLAVAGAMWNNILPSQLYRRLPEESKAMAAQIFGDMQLQMSYLDGTPERDAIVGAYADVQRKMVIAGVCMMPLVMASIVIWRNVNIKKQEEEEGSQTTGNIF.

Asn-29 carries N-linked (GlcNAc...) asparagine glycosylation. Helical transmembrane passes span 53-73 (LWLTFALLYLVAFVDMLLVSV), 90-110 (LLASVSIVATILSGCSTLTLA), 115-135 (VWGRIEGFLFMLLVVVVALIM), 146-166 (VAAHTLYWTGHIGMIYCVDVM), 177-194 (MIMFSINNTPTIASTFAG), 211-231 (FGAFAIMLVGVSLPVIVIMLF), 264-284 (VVGIVLITASFALILLPFSIV), 291-311 (WATGYIIAMEVVGVVCGAIFL), 331-351 (PTIIGSCLLYGVMFASALLTI), 354-374 (AGYVLNSFSLSSAILAPGIGL), and 379-399 (FKWAAYAGIPFMLLGTALLIP). A glycan (N-linked (GlcNAc...) asparagine) is linked at Asn-404. The next 3 membrane-spanning stretches (helical) occupy residues 407–427 (IGAVTITQVLVGIGTSFFSVC), 441–461 (VAVVLAIWGMFGSIGASVGLA), and 522–542 (VIAGVCMMPLVMASIVIWRNV).

It belongs to the major facilitator superfamily.

The protein resides in the membrane. Major facilitator transporter involved in siderophore transport. This chain is MFS siderochrome iron transporter 1, found in Ajellomyces capsulatus (Darling's disease fungus).